The chain runs to 91 residues: Small ribosomal subunit protein uS15 (91 aa).

Belongs to the universal ribosomal protein uS15 family. In terms of assembly, part of the 30S ribosomal subunit. Forms a bridge to the 50S subunit in the 70S ribosome, contacting the 23S rRNA.

One of the primary rRNA binding proteins, it binds directly to 16S rRNA where it helps nucleate assembly of the platform of the 30S subunit by binding and bridging several RNA helices of the 16S rRNA. Functionally, forms an intersubunit bridge (bridge B4) with the 23S rRNA of the 50S subunit in the ribosome. The sequence is that of Small ribosomal subunit protein uS15 from Rickettsia peacockii (strain Rustic).